The sequence spans 98 residues: Small ribosomal subunit protein bS6 (98 aa).

Belongs to the bacterial ribosomal protein bS6 family.

Its function is as follows. Binds together with bS18 to 16S ribosomal RNA. The polypeptide is Small ribosomal subunit protein bS6 (Staphylococcus carnosus (strain TM300)).